Here is a 308-residue protein sequence, read N- to C-terminus: Tetraspanin-12 (308 aa).

Over 1–41 the chain is Cytoplasmic; that stretch reads MANRRQPVQHRAQQRVYRQSQIRYAPGAGGESEISCCVKYS. The chain crosses the membrane as a helical span at residues 42-62; that stretch reads VFSFNVIFFLLGFGLLLFGVW. The Extracellular portion of the chain corresponds to 63–86; the sequence is AQIEKNTFVNMLSKASKLYLDPTW. A helical membrane pass occupies residues 87–107; the sequence is PLLIVGFLTFIIGFSGCVGSL. The Cytoplasmic portion of the chain corresponds to 108 to 112; the sequence is RENTS. The chain crosses the membrane as a helical span at residues 113–133; that stretch reads FLTFYSTLLGLLLIAEFSAGV. Residues 134 to 268 lie on the Extracellular side of the membrane; the sequence is FAYACRDQLD…PKLQLWLNNN (135 aa). Asparagine 213 is a glycosylation site (N-linked (GlcNAc...) asparagine). Residues 269-289 form a helical membrane-spanning segment; the sequence is MLLVAVSMVIIAIIQVLGICF. Topologically, residues 290–308 are cytoplasmic; sequence AQNLKSDILAQRAKWYYTH.

Belongs to the tetraspanin (TM4SF) family. In terms of assembly, may interact with protease sup-17; the interaction promotes sup-17 cell membrane localization. In terms of tissue distribution, expressed in the germline.

Its subcellular location is the cell membrane. It is found in the cytoplasmic vesicle membrane. It localises to the endosome membrane. The protein localises to the early endosome membrane. The protein resides in the late endosome membrane. Its subcellular location is the recycling endosome membrane. It is found in the golgi apparatus. It localises to the trans-Golgi network membrane. In terms of biological role, functions redundantly with tsp-14 isoform a to regulate body size, embryonic and vulva development. Functions redundantly with tsp-14 (isoforms a and b) to regulate cell fate specification in the postembryonic mesodermal M lineage and male development. May regulate BMP-like Sma/Mab signaling by mediating protease sup-17 trafficking to the cell surface. Together with tsp-14, functions redundantly to maintain cell surface levels of the BMP type II receptor daf-4 (but not BMP type I receptor sma-6), probably by regulating endosomal sorting of receptors and their targeting to degradative lysosomes. Together with tsp-14 involved in maintaining the structural and functional integrity of the endosomal network. Together with tsp-14, probably acts by modulating the activation of glp-1, a Notch-like receptor, to regulate germline maturation. Probably acts by modulating the activation of lin-12, a Notch-like receptor, to regulate cell fate specification such as the anchor cell/ventral uterine precursor cell decision. This Caenorhabditis elegans protein is Tetraspanin-12.